The primary structure comprises 635 residues: MSQTTTNSASETLGFQAEVKQLLHLMIHSLYSNKEIFLRELVSNASDACDKLRFEAIDQPGLLDGDGELAIRVDYDKAARTITISDNGIGLSRDEAVANLGTIARSGTREFFSQLTGDKQKDAQLIGQFGVGFYSSFIVADKVTVLSRRAGLAANEAIRWESDGQGEFSIAPAEKAGRGTDVVLHLRADEDELLNGWKLREILRRYSDHISLPIRMAKEDWDAEKGEQVKGDELETVNQANALWTRNKSDITDEQYREFYKTVSHDYDDPLAWTHNRVEGRSEYTQLLYVPRHAPFDLWDRDARRGVKLYVKRVFIMDDAEQLLPSYLRFVRGVIDSADLPLNVSREILQESRDVRAIREGSAKRVLSLLEDMAENKAEDYATFWTEFGQVLKEGTGEDAANRERIARLLCFASTHDGEQAQTVSFADYVGRMKDGQDKIYYVTADTFTAAANSPHLEIFRKKGIEVLLLSDRVDEWMLSYLREFDGKSLVSVAKGGLDLAELADEEEKKRQSEVAETFKPLVERLQQALAEQVKEVRVTQRLVDSPACVVVGQNELSPHLLRMLKAAGQEAPEVKPVLEINPDHALIARIRDASDAEFGDWAALLLDQALLAEGAQIADPAAFVKRLNGLLLKA.

The a; substrate-binding stretch occupies residues 1 to 346; the sequence is MSQTTTNSAS…SADLPLNVSR (346 aa). Residues 347–563 are b; sequence EILQESRDVR…QNELSPHLLR (217 aa). Residues 564–635 are c; the sequence is MLKAAGQEAP…KRLNGLLLKA (72 aa).

Belongs to the heat shock protein 90 family. Homodimer.

The protein resides in the cytoplasm. Functionally, molecular chaperone. Has ATPase activity. This is Chaperone protein HtpG from Bordetella parapertussis (strain 12822 / ATCC BAA-587 / NCTC 13253).